Reading from the N-terminus, the 38-residue chain is Large ribosomal subunit protein bL36A (38 aa).

The protein belongs to the bacterial ribosomal protein bL36 family.

This Cronobacter sakazakii (strain ATCC BAA-894) (Enterobacter sakazakii) protein is Large ribosomal subunit protein bL36A.